The following is a 267-amino-acid chain: Imidazole glycerol phosphate synthase subunit HisF (267 aa).

Residues D22 and D141 contribute to the active site.

It belongs to the HisA/HisF family. Heterodimer of HisH and HisF.

It localises to the cytoplasm. It catalyses the reaction 5-[(5-phospho-1-deoxy-D-ribulos-1-ylimino)methylamino]-1-(5-phospho-beta-D-ribosyl)imidazole-4-carboxamide + L-glutamine = D-erythro-1-(imidazol-4-yl)glycerol 3-phosphate + 5-amino-1-(5-phospho-beta-D-ribosyl)imidazole-4-carboxamide + L-glutamate + H(+). It participates in amino-acid biosynthesis; L-histidine biosynthesis; L-histidine from 5-phospho-alpha-D-ribose 1-diphosphate: step 5/9. In terms of biological role, IGPS catalyzes the conversion of PRFAR and glutamine to IGP, AICAR and glutamate. The HisF subunit catalyzes the cyclization activity that produces IGP and AICAR from PRFAR using the ammonia provided by the HisH subunit. The sequence is that of Imidazole glycerol phosphate synthase subunit HisF from Mycobacterium bovis (strain ATCC BAA-935 / AF2122/97).